The chain runs to 80 residues: Nuclear protein 1 (80 aa).

The disordered stretch occupies residues 40-80 (GGRKGRTKREAAANTNRPSPGGHERKLLTKFQNSERKKAWR). Residues 61–80 (GHERKLLTKFQNSERKKAWR) show a composition bias toward basic and acidic residues. Positions 64–80 (RKLLTKFQNSERKKAWR) match the Nuclear localization signal motif.

The protein belongs to the NUPR family. As to quaternary structure, monomer. Directly interacts with MSL1 and binds MORF4L1, two components of histone acetyltransferase complex; the interaction with MORF4L1 may be mediated by MSL1. Interacts with EP300; this interaction enhances the effect of EP300 on PAX2 transcription factor activity. Interacts with PAXIP1; this interaction prevents PAXIP1 inhibition of PAX2 transcription factor activity. Interacts with COPS5; this interaction allows COPS5-dependent CDKN1B nuclear to cytoplasm translocation. Interacts with RNF2. Interacts with FOXO3; this interaction represses FOXO3 transactivation. Interacts with PTMA; regulates apoptotic process. Interacts with MYOD1, EP300 and DDX5; this interaction coordinates the association of anti-proliferative and pro-myogenic proteins at the myogenin promoter. Interacts with TP53; interaction is stress-dependent. Forms a complex with EP300 and TP53; this complex binds CDKN1A promoter leading to transcriptional induction of CDKN1A. Phosphorylated. Phosphorylation promotes DNA-binding activity. In terms of processing, acetylated. Strongly activated in pancreatic acinar cells during the acute phase of pancreatitis, in developing pancreas and during pancreatic regeneration.

Its subcellular location is the nucleus. It localises to the cytoplasm. The protein resides in the perinuclear region. Functionally, transcription regulator that converts stress signals into a program of gene expression that empowers cells with resistance to the stress induced by a change in their microenvironment. Thereby participates in the regulation of many processes namely cell-cycle, apoptosis, autophagy and DNA repair responses. Controls cell cycle progression and protects cells from genotoxic stress induced by doxorubicin through the complex formation with TP53 and EP300 that binds CDKN1A promoter leading to transcriptional induction of CDKN1A. Protects pancreatic cancer cells from stress-induced cell death by binding the RELB promoter and activating its transcription, leading to IER3 transactivation. Negatively regulates apoptosis through interaction with PTMA. Inhibits autophagy-induced apoptosis in cardiac cells through FOXO3 interaction, inducing cytoplasmic translocation of FOXO3 thereby preventing the FOXO3 association with the pro-autophagic BNIP3 promoter. Inhibits cell growth and facilitates programmed cell death by apoptosis after adriamycin-induced DNA damage through transactivation of TP53. Regulates methamphetamine-induced apoptosis and autophagy through DDIT3-mediated endoplasmic reticulum stress pathway. Participates in DNA repair following gamma-irradiation by facilitating DNA access of the transcription machinery through interaction with MSL1 leading to inhibition of histone H4' Lys-16' acetylation (H4K16ac). Coactivator of PAX2 transcription factor activity, both by recruiting the EP300 cofactor to increase PAX2 transcription factor activity and by binding PAXIP1 to suppress PAXIP1-induced inhibition on PAX2. Positively regulates cell cycle progression through interaction with COPS5 inducing cytoplasmic translocation of CDKN1B leading to the CDKN1B degradation. Coordinates, through its interaction with EP300, the assiociation of MYOD1, EP300 and DDX5 to the MYOG promoter, leading to inhibition of cell-cycle progression and myogenic differentiation promotion. Negatively regulates beta cell proliferation via inhibition of cell-cycle regulatory genes expression through the suppression of their promoter activities. Also required for LHB expression and ovarian maturation. Exacerbates CNS inflammation and demyelination upon cuprizone treatment. The chain is Nuclear protein 1 from Rattus norvegicus (Rat).